An 80-amino-acid polypeptide reads, in one-letter code: uncharacterized protein (80 aa).

This is an uncharacterized protein from Homo sapiens (Human).